The chain runs to 438 residues: Protein SPMIP7 (438 aa).

In terms of tissue distribution, testis-specific.

In terms of biological role, essential for normal spermatogenesis. The chain is Protein SPMIP7 from Homo sapiens (Human).